A 117-amino-acid polypeptide reads, in one-letter code: Large ribosomal subunit protein uL18 (117 aa).

This sequence belongs to the universal ribosomal protein uL18 family. Part of the 50S ribosomal subunit; part of the 5S rRNA/L5/L18/L25 subcomplex. Contacts the 5S and 23S rRNAs.

Its function is as follows. This is one of the proteins that bind and probably mediate the attachment of the 5S RNA into the large ribosomal subunit, where it forms part of the central protuberance. The polypeptide is Large ribosomal subunit protein uL18 (Haemophilus ducreyi (strain 35000HP / ATCC 700724)).